A 370-amino-acid chain; its full sequence is tRNA-specific 2-thiouridylase MnmA (370 aa).

ATP contacts are provided by residues 8-15 (GMSGGVDS) and Met34. An interaction with target base in tRNA region spans residues 104–106 (NPD). Residue Cys109 is the Nucleophile of the active site. The cysteines at positions 109 and 202 are disulfide-linked. Gly134 is a binding site for ATP. Residues 152 to 154 (KDQ) are interaction with tRNA. Cys202 functions as the Cysteine persulfide intermediate in the catalytic mechanism. An interaction with tRNA region spans residues 309 to 310 (RY).

Belongs to the MnmA/TRMU family.

The protein resides in the cytoplasm. The catalysed reaction is S-sulfanyl-L-cysteinyl-[protein] + uridine(34) in tRNA + AH2 + ATP = 2-thiouridine(34) in tRNA + L-cysteinyl-[protein] + A + AMP + diphosphate + H(+). Functionally, catalyzes the 2-thiolation of uridine at the wobble position (U34) of tRNA, leading to the formation of s(2)U34. The polypeptide is tRNA-specific 2-thiouridylase MnmA (Metamycoplasma arthritidis (strain 158L3-1) (Mycoplasma arthritidis)).